Here is a 324-residue protein sequence, read N- to C-terminus: mRNA decay activator protein ZFP36 (324 aa).

A necessary for nuclear export region spans residues methionine 1–proline 15. The tract at residues methionine 1–threonine 98 is necessary and sufficient for the association with mRNA decay enzymes and mRNA decay activation. 2 necessary for localization of ARE-containing mRNAs to processing bodies (PBs) regions span residues methionine 1–alanine 172 and threonine 98–glutamate 324. Positions proline 15–proline 46 are enriched in low complexity. A disordered region spans residues proline 15–alanine 50. Phosphoserine; by MAPKAPK2 is present on serine 58. A Phosphoserine modification is found at serine 64. The P-P-P-P-G repeat unit spans residues proline 69–glycine 73. Residues proline 76–serine 100 are disordered. Phosphoserine occurs at positions 86 and 88. Threonine 90 is modified (phosphothreonine). Serine 91 carries the post-translational modification Phosphoserine. Residues threonine 93–proline 166 are necessary for nuclear localization. The tract at residues threonine 95–alanine 171 is necessary for RNA-binding. 2 consecutive C3H1-type zinc fingers follow at residues arginine 101–glycine 129 and lysine 139–serine 167. Residues arginine 101–arginine 192 form a necessary for interaction with PABPN1 region. At serine 167 the chain carries Phosphoserine. Residues alanine 172–glutamate 324 are necessary for mRNA decay activation. Phosphoserine; by MAPKAPK2 is present on serine 184. Disordered regions lie at residues phenylalanine 185–serine 227 and proline 270–glutamate 324. Serine 195 is modified (phosphoserine). One copy of the P-P-P-P-G repeat lies at proline 196–serine 200. A compositionally biased stretch (low complexity) spans proline 204–serine 214. At serine 216 the chain carries Phosphoserine. The P-P-P-P-G repeat unit spans residues proline 218–glycine 222. Serine 227 bears the Phosphoserine; by MAPK1; in vitro mark. Residues serine 274, serine 294, and serine 321 each carry the phosphoserine modification. The tract at residues alanine 310–glutamate 324 is interaction with CNOT1.

As to quaternary structure, associates with cytoplasmic CCR4-NOT and PAN2-PAN3 deadenylase complexes to trigger ARE-containing mRNA deadenylation and decay processes. Part of a mRNA decay activation complex at least composed of poly(A)-specific exoribonucleases CNOT6, EXOSC2 and XRN1 and mRNA-decapping enzymes DCP1A and DCP2. Associates with the RNA exosome complex. Interacts (via phosphorylated form) with 14-3-3 proteins; these interactions promote exclusion of ZFP36 from cytoplasmic stress granules in response to arsenite treatment in a MAPKAPK2-dependent manner and does not prevent CCR4-NOT deadenylase complex recruitment or ZFP36-induced ARE-containing mRNA deadenylation and decay processes. Interacts with 14-3-3 proteins; these interactions occur in response to rapamycin in an Akt-dependent manner. Interacts with AGO2 and AGO4. Interacts (via C-terminus) with CNOT1; this interaction occurs in a RNA-independent manner and induces mRNA deadenylation. Interacts (via N-terminus) with CNOT6. Interacts with CNOT6L. Interacts (via C-terminus) with CNOT7; this interaction occurs in a RNA-independent manner, induces mRNA deadenylation and is inhibited in a phosphorylation MAPKAPK2-dependent manner. Interacts (via unphosphorylated form) with CNOT8; this interaction occurs in a RNA-independent manner and is inhibited in a phosphorylation MAPKAPK2-dependent manner. Interacts with DCP1A. Interacts (via N-terminus) with DCP2. Interacts with EDC3. Interacts (via N-terminus) with EXOSC2. Interacts with heat shock 70 kDa proteins. Interacts with KHSRP; this interaction increases upon cytokine-induced treatment. Interacts with MAP3K4; this interaction enhances the association with SH3KBP1/CIN85. Interacts with MAPKAPK2; this interaction occurs upon skeletal muscle satellite cell activation. Interacts with NCL. Interacts with NUP214; this interaction increases upon lipopolysaccharide (LPS) stimulation. Interacts with PABPC1; this interaction occurs in a RNA-dependent manner. Interacts (via hypophosphorylated form) with PABPN1 (via RRM domain and C-terminal arginine-rich region); this interaction occurs in the nucleus in a RNA-independent manner, decreases in presence of single-stranded poly(A) RNA-oligomer and in a p38 MAPK-dependent-manner and inhibits nuclear poly(A) tail synthesis. Interacts with PAN2. Interacts (via C3H1-type zinc finger domains) with PKM. Interacts (via C3H1-type zinc finger domains) with nuclear RNA poly(A) polymerase. Interacts with PPP2CA; this interaction occurs in LPS-stimulated cells and induces ZFP36 dephosphorylation, and hence may promote ARE-containing mRNAs decay. Interacts (via C-terminus) with PRR5L (via C-terminus); this interaction may accelerate ZFP36-mediated mRNA decay during stress. Interacts (via C-terminus) with SFN; this interaction occurs in a phosphorylation-dependent manner. Interacts (via extreme C-terminal region) with SH3KBP1/CIN85 (via SH3 domains); this interaction enhances MAP3K4-induced phosphorylation of ZFP36 at Ser-64 and Ser-91 and does not alter neither ZFP36 binding to ARE-containing transcripts nor TNF-alpha mRNA decay. Interacts with XRN1. Interacts (via C-terminus and Ser-184 phosphorylated form) with YWHAB; this interaction occurs in a p38/MAPKAPK2-dependent manner, increases cytoplasmic localization of ZFP36 and protects ZFP36 from Ser-184 dephosphorylation by serine/threonine phosphatase 2A, and hence may be crucial for stabilizing ARE-containing mRNAs. Interacts (via phosphorylated form) with YWHAE. Interacts (via C-terminus) with YWHAG; this interaction occurs in a phosphorylation-dependent manner. Interacts with YWHAH; this interaction occurs in a phosphorylation-dependent manner. Interacts with YWHAQ; this interaction occurs in a phosphorylation-dependent manner. Interacts with (via C-terminus) YWHAZ; this interaction occurs in a phosphorylation-dependent manner. Does not interact with SH3KBP1. Interacts (via P-P-P-P-G repeats) with GIGYF2; the interaction is direct. Phosphorylated. Phosphorylation at serine and/or threonine residues occurs in a p38 MAPK- and MAPKAPK2-dependent manner. Phosphorylated by MAPKAPK2 at Ser-58 and Ser-184; phosphorylation increases its stability and cytoplasmic localization, promotes binding to 14-3-3 adapter proteins and inhibits the recruitment of cytoplasmic CCR4-NOT and PAN2-PAN3 deadenylase complexes to the mRNA decay machinery, thereby inhibiting ZFP36-induced ARE-containing mRNA deadenylation and decay processes. Phosphorylation by MAPKAPK2 does not impair ARE-containing RNA-binding. Phosphorylated in a MAPKAPK2- and p38 MAPK-dependent manner upon skeletal muscle satellite cell activation; this phosphorylation inhibits ZFP36-mediated mRNA decay activity, and hence stabilizes MYOD1 mRNA. Phosphorylated by MAPK1 upon mitogen stimulation. Phosphorylated at Ser-64 and Ser-91; these phosphorylations increase in a SH3KBP1-dependent manner. Phosphorylated at serine and threonine residues in a pyruvate kinase PKM- and p38 MAPK-dependent manner. Phosphorylation at Ser-58 may participate in the PKM-mediated degradation of ZFP36 in a p38 MAPK-dependent manner. Dephosphorylated by serine/threonine phosphatase 2A at Ser-184. Post-translationally, ubiquitinated; pyruvate kinase (PKM)-dependent ubiquitination leads to proteasomal degradation through a p38 MAPK signaling pathway.

The protein localises to the nucleus. It localises to the cytoplasm. It is found in the cytoplasmic granule. The protein resides in the P-body. In terms of biological role, zinc-finger RNA-binding protein that destabilizes numerous cytoplasmic AU-rich element (ARE)-containing mRNA transcripts by promoting their poly(A) tail removal or deadenylation, and hence provide a mechanism for attenuating protein synthesis. Acts as an 3'-untranslated region (UTR) ARE mRNA-binding adapter protein to communicate signaling events to the mRNA decay machinery. Recruits deadenylase CNOT7 (and probably the CCR4-NOT complex) via association with CNOT1, and hence promotes ARE-mediated mRNA deadenylation. Also functions by recruiting components of the cytoplasmic RNA decay machinery to the bound ARE-containing mRNAs. Self regulates by destabilizing its own mRNA. Binds to 3'-UTR ARE of numerous mRNAs. Also binds to ARE of its own mRNA. Plays a role in anti-inflammatory responses; suppresses tumor necrosis factor (TNF)-alpha production by stimulating ARE-mediated TNF-alpha mRNA decay and several other inflammatory ARE-containing mRNAs in interferon (IFN)- and/or lipopolysaccharide (LPS)-induced macrophages. Also plays a role in the regulation of dendritic cell maturation at the post-transcriptional level, and hence operates as part of a negative feedback loop to limit the inflammatory response. Promotes ARE-mediated mRNA decay of hypoxia-inducible factor HIF1A mRNA during the response of endothelial cells to hypoxia. Positively regulates early adipogenesis of preadipocytes by promoting ARE-mediated mRNA decay of immediate early genes (IEGs). Negatively regulates hematopoietic/erythroid cell differentiation by promoting ARE-mediated mRNA decay of the transcription factor STAT5B mRNA. Plays a role in maintaining skeletal muscle satellite cell quiescence by promoting ARE-mediated mRNA decay of the myogenic determination factor MYOD1 mRNA. Also associates with and regulates the expression of non-ARE-containing target mRNAs at the post-transcriptional level, such as MHC class I mRNAs. Participates in association with argonaute RISC catalytic components in the ARE-mediated mRNA decay mechanism; assists microRNA (miRNA) targeting ARE-containing mRNAs. May also play a role in the regulation of cytoplasmic mRNA decapping; enhances decapping of ARE-containing RNAs, in vitro. Involved in the delivery of target ARE-mRNAs to processing bodies (PBs). In addition to its cytosolic mRNA-decay function, affects nuclear pre-mRNA processing. Negatively regulates nuclear poly(A)-binding protein PABPN1-stimulated polyadenylation activity on ARE-containing pre-mRNA during LPS-stimulated macrophages. Also involved in the regulation of stress granule (SG) and P-body (PB) formation and fusion. Plays a role in the regulation of keratinocyte proliferation, differentiation and apoptosis. Plays a role as a tumor suppressor by inhibiting cell proliferation in breast cancer cells. The chain is mRNA decay activator protein ZFP36 from Bos taurus (Bovine).